The following is a 104-amino-acid chain: uncharacterized protein (104 aa).

This is an uncharacterized protein from Treponema pallidum (strain Nichols).